The following is a 795-amino-acid chain: ATP-dependent RNA helicase DHX15 (795 aa).

A disordered region spans residues 1-111 (MSKRHRLDLG…HTGHTGHTSL (111 aa)). Ser-15 is subject to Phosphoserine. Residues 20–62 (AGTDGKDRERDRDREDRSKDRDRERDRGDREREREKEKEKELR) are compositionally biased toward basic and acidic residues. A compositionally biased stretch (low complexity) spans 79-110 (ASHSAHSTHSAHSTHSTHSAHSTHTGHTGHTS). The region spanning 147 to 313 (TDILVRHQSF…FDNCPLLTIP (167 aa)) is the Helicase ATP-binding domain. 160-167 (GETGSGKT) contributes to the ATP binding site. The short motif at 260–263 (DEAH) is the DEAH box element. The 181-residue stretch at 338 to 518 (TVIQIHMCEE…SVVLQLKKLG (181 aa)) folds into the Helicase C-terminal domain. Lys-488 carries the N6-acetyllysine modification. Residue Lys-786 forms a Glycyl lysine isopeptide (Lys-Gly) (interchain with G-Cter in SUMO2) linkage.

The protein belongs to the DEAD box helicase family. DEAH subfamily. DDX15/PRP43 sub-subfamily. Component of the U11/U12 snRNPs that are part of the U12-type spliceosome. Identified in the Intron Large spliceosome complex (IL, also named intron lariat spliceosome), a post-mRNA release spliceosomal complex containing the excised intron, U2, U5 and U6 snRNPs, and splicing factors; the association may be transient. The IL complex exists in two distinct conformations, one with the DHX15 (ILS2) and one without (ILS1). Interacts with TFIP11 (via G-patch domain); indicative for a recruitment to the IL complex. Interacts with SSB/La. Interacts with GPATCH2 (via G-patch domain); promoting the RNA helicase activity. Interacts with NKRF (via G-patch domain); promoting the RNA helicase activity. Interacts with NLRP6. In terms of tissue distribution, ubiquitous.

It is found in the nucleus. The protein resides in the nucleolus. The enzyme catalyses ATP + H2O = ADP + phosphate + H(+). ATPase activity is enhanced upon binding to G-patch domain-containing proteins. G-patch domain-containing proteins act like a brace that tethers mobile sections of DHX15 together, stabilizing a functional conformation with high RNA affinity, thereby promoting the ATPase activity. RNA helicase involved in mRNA processing and antiviral innate immunity. Pre-mRNA processing factor involved in disassembly of spliceosomes after the release of mature mRNA. In cooperation with TFIP11 seem to be involved in the transition of the U2, U5 and U6 snRNP-containing IL complex to the snRNP-free IS complex leading to efficient debranching and turnover of excised introns. Plays a key role in antiviral innate immunity by promoting both MAVS-dependent signaling and NLRP6 inflammasome. Acts as an RNA virus sensor: recognizes and binds viral double stranded RNA (dsRNA) and activates the MAVS-dependent signaling to produce interferon-beta and interferon lambda-3 (IFNL3). Involved in intestinal antiviral innate immunity together with NLRP6: recognizes and binds viral dsRNA and promotes activation of the NLRP6 inflammasome in intestinal epithelial cells to restrict infection by enteric viruses. The NLRP6 inflammasome acts by promoting maturation and secretion of IL18 in the extracellular milieu. Also involved in antibacterial innate immunity by promoting Wnt-induced antimicrobial protein expression in Paneth cells. In Mus musculus (Mouse), this protein is ATP-dependent RNA helicase DHX15.